The primary structure comprises 597 residues: Myrcene synthase, chloroplastic (597 aa).

The N-terminal 56 residues, 1 to 56 (MALKLLTSLPMYNFSRVPVSSKDPILLVTSRTRNGYLARPVQCMVANKVSTSPDIL), are a transit peptide targeting the chloroplast. Residues Arg310, Asp347, Asp351, Arg488, and Asp491 each contribute to the (2E)-geranyl diphosphate site. Mg(2+) contacts are provided by Asp347 and Asp351. The DDXXD motif motif lies at 347-351 (DDVYD). Asp491, Thr495, and Glu499 together coordinate Mg(2+).

Belongs to the terpene synthase family. Tpsb subfamily. Mg(2+) is required as a cofactor. The cofactor is Mn(2+).

It localises to the plastid. The protein localises to the chloroplast. The catalysed reaction is (2E)-geranyl diphosphate = beta-myrcene + diphosphate. Its function is as follows. Involved in monoterpene (C10) biosynthesis. The major product is myrcene followed by minor amounts (1.2%) of the cyclic monoterpene limonene. This chain is Myrcene synthase, chloroplastic, found in Quercus ilex (Holly oak).